A 464-amino-acid chain; its full sequence is Cysteine--tRNA ligase (464 aa).

Cys29 is a Zn(2+) binding site. Residues 31 to 41 carry the 'HIGH' region motif; it reads ATVQGDPHIGH. 3 residues coordinate Zn(2+): Cys207, His232, and Glu236. The 'KMSKS' region motif lies at 263–267; sequence KMSKS. Residue Lys266 participates in ATP binding.

The protein belongs to the class-I aminoacyl-tRNA synthetase family. In terms of assembly, monomer. Zn(2+) serves as cofactor.

The protein resides in the cytoplasm. It carries out the reaction tRNA(Cys) + L-cysteine + ATP = L-cysteinyl-tRNA(Cys) + AMP + diphosphate. The polypeptide is Cysteine--tRNA ligase (Rhodococcus jostii (strain RHA1)).